Here is a 348-residue protein sequence, read N- to C-terminus: Anthranilate phosphoribosyltransferase (348 aa).

5-phospho-alpha-D-ribose 1-diphosphate-binding positions include Gly81, 84-85, 91-94, 109-117, and Ser121; these read GD, NVST, and KHGNRAVSG. Gly81 contributes to the anthranilate binding site. Ser93 contacts Mg(2+). Asn112 serves as a coordination point for anthranilate. Residue Arg167 coordinates anthranilate. The Mg(2+) site is built by Asp226 and Glu227.

It belongs to the anthranilate phosphoribosyltransferase family. Homodimer. Requires Mg(2+) as cofactor.

The enzyme catalyses N-(5-phospho-beta-D-ribosyl)anthranilate + diphosphate = 5-phospho-alpha-D-ribose 1-diphosphate + anthranilate. Its pathway is amino-acid biosynthesis; L-tryptophan biosynthesis; L-tryptophan from chorismate: step 2/5. In terms of biological role, catalyzes the transfer of the phosphoribosyl group of 5-phosphorylribose-1-pyrophosphate (PRPP) to anthranilate to yield N-(5'-phosphoribosyl)-anthranilate (PRA). This is Anthranilate phosphoribosyltransferase from Ectopseudomonas mendocina (strain ymp) (Pseudomonas mendocina).